A 704-amino-acid chain; its full sequence is Conserved oligomeric Golgi complex subunit 6 (704 aa).

This sequence belongs to the COG6 family.

Its subcellular location is the golgi apparatus membrane. In terms of biological role, acts as a component of the peripheral membrane COG complex that is involved in intra-Golgi protein trafficking. COG is located at the cis-Golgi, and regulates tethering of retrograde intra-Golgi vesicles and possibly a number of other membrane trafficking events. This Pyricularia oryzae (strain 70-15 / ATCC MYA-4617 / FGSC 8958) (Rice blast fungus) protein is Conserved oligomeric Golgi complex subunit 6 (COG6).